The chain runs to 520 residues: Chaperone Ric-8B (520 aa).

Ser-468 carries the phosphoserine modification. Phosphothreonine is present on Thr-473.

Belongs to the synembryn family. Interacts with GDP-bound G(s) G-alpha proteins GNAL and GNAS. Does not interact with G-alpha proteins when they are in complex with subunits beta and gamma. In terms of tissue distribution, predominantly expressed in the mature olfactory sensory neurons and also in a few regions in the brain.

The protein resides in the cytoplasm. The protein localises to the cell cortex. Functionally, chaperone that specifically binds and folds nascent G(s) G-alpha proteins (GNAS and GNAL) prior to G protein heterotrimer formation, promoting their association with the plasma membrane. Also acts as a guanine nucleotide exchange factor (GEF) for G(s) proteins by stimulating exchange of bound GDP for free GTP. Acts as an important component for odorant signal transduction by mediating GNAL (G(olf)-alpha) folding, thereby promoting-dependent cAMP accumulation in olfactory sensory neurons. The sequence is that of Chaperone Ric-8B from Mus musculus (Mouse).